The sequence spans 335 residues: Adenosine deaminase (335 aa).

The Zn(2+) site is built by His-12 and His-14. Positions 14 and 16 each coordinate substrate. His-197 lines the Zn(2+) pocket. Glu-200 functions as the Proton donor in the catalytic mechanism. Asp-278 is a binding site for Zn(2+).

It belongs to the metallo-dependent hydrolases superfamily. Adenosine and AMP deaminases family. Adenosine deaminase subfamily. Requires Zn(2+) as cofactor.

The catalysed reaction is adenosine + H2O + H(+) = inosine + NH4(+). It catalyses the reaction 2'-deoxyadenosine + H2O + H(+) = 2'-deoxyinosine + NH4(+). In terms of biological role, catalyzes the hydrolytic deamination of adenosine and 2-deoxyadenosine. This is Adenosine deaminase from Clostridium botulinum (strain Langeland / NCTC 10281 / Type F).